A 184-amino-acid chain; its full sequence is Probable RNA 2'-phosphotransferase (184 aa).

This sequence belongs to the KptA/TPT1 family.

In terms of biological role, removes the 2'-phosphate from RNA via an intermediate in which the phosphate is ADP-ribosylated by NAD followed by a presumed transesterification to release the RNA and generate ADP-ribose 1''-2''-cyclic phosphate (APPR&gt;P). May function as an ADP-ribosylase. The polypeptide is Probable RNA 2'-phosphotransferase (Escherichia coli O8 (strain IAI1)).